A 75-amino-acid polypeptide reads, in one-letter code: Protease B inhibitor 1 (75 aa).

Thr-74 carries the post-translational modification Phosphothreonine.

Belongs to the protease inhibitor I9 family. Part of the heterodimeric LMA1 complex together with the thioredoxin II/TRX2. LMA1 binds to the ATPase SEC18.

It is found in the cytoplasm. The protein resides in the nucleus. Cytosolic inhibitor of vacuolar proteinase B (yscB), probably regulating protease B activity during limited proteolysis. PBI2 is a component of the LMA1 complex, which is involved in the facilitation of vesicle fusion such as homotypic vacuole and ER-derived COPII vesicle fusion with the Golgi. This chain is Protease B inhibitor 1 (PBI2), found in Saccharomyces cerevisiae (Baker's yeast).